The primary structure comprises 320 residues: Transaldolase (320 aa).

The active-site Schiff-base intermediate with substrate is Lys-126.

The protein belongs to the transaldolase family. Type 1 subfamily. As to quaternary structure, homodimer.

The protein localises to the cytoplasm. The catalysed reaction is D-sedoheptulose 7-phosphate + D-glyceraldehyde 3-phosphate = D-erythrose 4-phosphate + beta-D-fructose 6-phosphate. Its pathway is carbohydrate degradation; pentose phosphate pathway; D-glyceraldehyde 3-phosphate and beta-D-fructose 6-phosphate from D-ribose 5-phosphate and D-xylulose 5-phosphate (non-oxidative stage): step 2/3. Transaldolase is important for the balance of metabolites in the pentose-phosphate pathway. The protein is Transaldolase of Bordetella pertussis (strain Tohama I / ATCC BAA-589 / NCTC 13251).